The following is a 273-amino-acid chain: uncharacterized protein (273 aa).

The chain crosses the membrane as a helical span at residues 7 to 25 (FFRWAFLIATVYVAYYFLV). 2 disordered regions span residues 34-154 (KPQK…LKMK) and 168-273 (LHNS…DSLW). Positions 36–54 (QKSKLTKLGKQKQRQKQKN) are enriched in basic residues. The segment covering 55 to 91 (TKKDTLVNRETPSKKSQKLETSDALKSKSKDSSKKEP) has biased composition (basic and acidic residues). Low complexity predominate over residues 92–101 (VVVPKKGTPK). Basic and acidic residues predominate over residues 115 to 144 (PKKEKLVGKNPAEKEDTTDVEDTQKLEQKH). Polar residues predominate over residues 145–154 (STTPSSLKMK). Residues 201 to 212 (KRQRQNQQKKLR) are compositionally biased toward basic residues. Residues 213-240 (AKEMQELADEEQRRRLAAHRKELHEANR) are compositionally biased toward basic and acidic residues. Positions 245–266 (LNNSSRSAYSYINNGQAGSSKG) are enriched in polar residues.

The protein resides in the cytoplasm. It localises to the membrane. This is an uncharacterized protein from Schizosaccharomyces pombe (strain 972 / ATCC 24843) (Fission yeast).